A 39-amino-acid chain; its full sequence is Osmotin-like protein (39 aa).

It belongs to the thaumatin family. Contains intrachain disulfide bonds.

Functionally, may be an important antifungal protein. This chain is Osmotin-like protein, found in Hevea brasiliensis (Para rubber tree).